We begin with the raw amino-acid sequence, 36 residues long: U1-ectatotoxin-Et1b subunit B (36 aa).

Cys-11 and Cys-33 are oxidised to a cystine.

The protein belongs to the ectatomin family. Ectatomin-Et subfamily. In terms of assembly, heterodimer of subunits A and B; disulfide-linked. In terms of tissue distribution, expressed by the venom gland.

The protein resides in the secreted. Its subcellular location is the target cell membrane. This is U1-ectatotoxin-Et1b subunit B from Ectatomma tuberculatum (Selva ant).